Reading from the N-terminus, the 177-residue chain is Bifunctional protein PyrR (177 aa).

The PRPP-binding signature appears at 99 to 111 (LVLIDDVIYKGRT).

Belongs to the purine/pyrimidine phosphoribosyltransferase family. PyrR subfamily.

It catalyses the reaction UMP + diphosphate = 5-phospho-alpha-D-ribose 1-diphosphate + uracil. Its function is as follows. Regulates the transcription of the pyrimidine nucleotide (pyr) operon in response to exogenous pyrimidines. Also displays a weak uracil phosphoribosyltransferase activity which is not physiologically significant. The protein is Bifunctional protein PyrR of Picosynechococcus sp. (strain ATCC 27264 / PCC 7002 / PR-6) (Agmenellum quadruplicatum).